A 522-amino-acid chain; its full sequence is 5,6-dihydroxyindole-2-carboxylic acid oxidase (522 aa).

The signal sequence occupies residues 1-21 (MLRTSCGGMLLLVHALGLVRA). Over 22-470 (QFPRACVTPE…RPLTPTQIVT (449 aa)) the chain is Lumenal, melanosome. 5 cysteine pairs are disulfide-bonded: Cys-27-Cys-38, Cys-39-Cys-59, Cys-50-Cys-89, Cys-91-Cys-100, and Cys-103-Cys-112. Residues Asn-164 and Asn-171 are each glycosylated (N-linked (GlcNAc...) asparagine). His-182, His-205, and His-214 together coordinate Zn(2+). 2 disulfide bridges follow: Cys-248–Cys-251 and Cys-280–Cys-293. Asn-294 carries N-linked (GlcNAc...) asparagine glycosylation. Zn(2+)-binding residues include His-367 and His-371. N-linked (GlcNAc...) asparagine glycosylation occurs at Asn-375. His-394 is a Zn(2+) binding site. A helical transmembrane segment spans residues 471 to 491 (VAVVAALLLVAIIFAASTCVV). Topologically, residues 492 to 522 (HLRGNRTEGRQPLLGDQYQRYEDHNKTQSVV) are cytoplasmic.

It belongs to the tyrosinase family. It depends on Cu(2+) as a cofactor. Zn(2+) is required as a cofactor.

It is found in the melanosome membrane. The catalysed reaction is 2 5,6-dihydroxyindole-2-carboxylate + O2 = 2 indole-5,6-quinone-2-carboxylate + 2 H2O. It functions in the pathway pigment biosynthesis; melanin biosynthesis. Plays a role in melanin biosynthesis. Catalyzes the oxidation of 5,6-dihydroxyindole-2-carboxylic acid (DHICA) into indole-5,6-quinone-2-carboxylic acid. May regulate or influence the type of melanin synthesized. Also to a lower extent, capable of hydroxylating tyrosine and producing melanin. This Carassius auratus (Goldfish) protein is 5,6-dihydroxyindole-2-carboxylic acid oxidase (tyrp1).